A 686-amino-acid chain; its full sequence is Thymidine kinase (686 aa).

Residues 1 to 14 (MASNSHNNYNTPRR) are compositionally biased toward polar residues. 2 disordered regions span residues 1–21 (MASN…DVPK) and 64–85 (NPGL…PSSD). 243 to 250 (GCMAAGKT) is a binding site for ATP. Glutamate 270 acts as the Proton acceptor in catalysis. Substrate is bound at residue glutamine 308. An ATP-binding site is contributed by arginine 398. Arginine 404 provides a ligand contact to substrate.

This sequence belongs to the herpesviridae thymidine kinase family. In terms of assembly, homodimer.

The catalysed reaction is thymidine + ATP = dTMP + ADP + H(+). Functionally, catalyzes the transfer of the gamma-phospho group of ATP to thymidine to generate dTMP in the salvage pathway of pyrimidine synthesis. The dTMP serves as a substrate for DNA polymerase during viral DNA replication. Allows the virus to be reactivated and to grow in non-proliferative cells lacking a high concentration of phosphorylated nucleic acid precursors. This is Thymidine kinase from Alcelaphine herpesvirus 1 (strain WC11) (AlHV-1).